The sequence spans 433 residues: Glutamyl-tRNA reductase (433 aa).

Substrate-binding positions include 49–52, Ser109, 114–116, and Gln120; these read TCNR and EGQ. Cys50 serves as the catalytic Nucleophile. 198 to 203 is an NADP(+) binding site; it reads GAGRMS.

Belongs to the glutamyl-tRNA reductase family. Homodimer.

The catalysed reaction is (S)-4-amino-5-oxopentanoate + tRNA(Glu) + NADP(+) = L-glutamyl-tRNA(Glu) + NADPH + H(+). It functions in the pathway porphyrin-containing compound metabolism; protoporphyrin-IX biosynthesis; 5-aminolevulinate from L-glutamyl-tRNA(Glu): step 1/2. The protein operates within porphyrin-containing compound metabolism; chlorophyll biosynthesis. Catalyzes the NADPH-dependent reduction of glutamyl-tRNA(Glu) to glutamate 1-semialdehyde (GSA). The protein is Glutamyl-tRNA reductase of Prochlorococcus marinus subsp. pastoris (strain CCMP1986 / NIES-2087 / MED4).